Reading from the N-terminus, the 395-residue chain is S-adenosylmethionine synthase (395 aa).

Residue histidine 16 coordinates ATP. Mg(2+) is bound at residue aspartate 18. Glutamate 44 serves as a coordination point for K(+). Residues glutamate 57 and glutamine 100 each contribute to the L-methionine site. A flexible loop region spans residues 100-110 (QSTDIAQGVNE). Residues 174-176 (DAK), 241-242 (RF), aspartate 250, 256-257 (RK), alanine 273, and lysine 277 each bind ATP. Aspartate 250 contributes to the L-methionine binding site. Lysine 281 is an L-methionine binding site.

The protein belongs to the AdoMet synthase family. Homotetramer; dimer of dimers. Mg(2+) is required as a cofactor. K(+) serves as cofactor.

The protein resides in the cytoplasm. The catalysed reaction is L-methionine + ATP + H2O = S-adenosyl-L-methionine + phosphate + diphosphate. The protein operates within amino-acid biosynthesis; S-adenosyl-L-methionine biosynthesis; S-adenosyl-L-methionine from L-methionine: step 1/1. In terms of biological role, catalyzes the formation of S-adenosylmethionine (AdoMet) from methionine and ATP. The overall synthetic reaction is composed of two sequential steps, AdoMet formation and the subsequent tripolyphosphate hydrolysis which occurs prior to release of AdoMet from the enzyme. The polypeptide is S-adenosylmethionine synthase (Streptococcus uberis (strain ATCC BAA-854 / 0140J)).